Here is a 1223-residue protein sequence, read N- to C-terminus: WD repeat-containing protein 11 (1223 aa).

2 WD repeats span residues Lys59–Glu108 and Glu111–Lys154. Phosphoserine is present on residues Ser205 and Ser209. A WD 3 repeat occupies Lys354 to Asn393. Residues Ser401 and Ser405 each carry the phosphoserine modification. WD repeat units follow at residues Arg470–Glu509, Asn565–Glu604, Gly707–Ile744, Thr746–Ser786, Asn792–Arg830, and Ala892–Ser939.

Component of the complex WDR11 composed of C17orf75, FAM91A1 and WDR11; FAM91A1 and WDR11 are required for proper location of the complex. Interacts with GLI3; the interaction associateS EMX1 with GLI3. Interacts with TBC1D23; this interaction may be indirect and recruits TBC1D23 to AP-1-derived vesicles. Interacts (via the N-terminal and the central portion of the protein) with EMX1. As to expression, broadly expressed in various organs including brain, eye,ear, lung, heart, kideny and gonads. Cerebral cortex. The entire developing central nervous system, except for the spinal cord, reveals expression. Expressed in the neuroepithelium, including the diencephalic region that gives rise to hypothalamic neurons. In the adult brain, intense expression is restricted to the olfactory bulb, the olfaction-related piriform cortex, the granule cell layer of the cerebellum, and neurons of the hippocampal formation. The brain demonstrated expression scattered throughout the hypothalamus, sometimes in clusters of neurons.

It localises to the cytoplasm. The protein resides in the cytoskeleton. It is found in the cilium basal body. Its subcellular location is the nucleus. The protein localises to the cilium axoneme. It localises to the cytoplasmic vesicle. The protein resides in the golgi apparatus. It is found in the trans-Golgi network. Its function is as follows. Involved in the Hedgehog (Hh) signaling pathway, is essential for normal ciliogenesis. Regulates the proteolytic processing of GLI3 and cooperates with the transcription factor EMX1 in the induction of downstream Hh pathway gene expression and gonadotropin-releasing hormone production. WDR11 complex facilitates the tethering of Adaptor protein-1 complex (AP-1)-derived vesicles. WDR11 complex acts together with TBC1D23 to facilitate the golgin-mediated capture of vesicles generated using AP-1. The sequence is that of WD repeat-containing protein 11 (Wdr11) from Mus musculus (Mouse).